The following is a 410-amino-acid chain: Phosphoserine phosphatase (410 aa).

Positions 13–91 (LVKIFGKDRP…QAEIISGIGD (79 aa)) constitute an ACT domain. Aspartate 187 (nucleophile) is an active-site residue. Residues aspartate 187 and aspartate 189 each coordinate Mg(2+). The Proton donor role is filled by aspartate 189. Residues glutamate 196, arginine 232, 275-276 (SG), and lysine 320 each bind substrate. Residue aspartate 343 coordinates Mg(2+). Position 346 (asparagine 346) interacts with substrate.

It belongs to the HAD-like hydrolase superfamily. SerB family. Mg(2+) is required as a cofactor.

It catalyses the reaction O-phospho-L-serine + H2O = L-serine + phosphate. The catalysed reaction is O-phospho-D-serine + H2O = D-serine + phosphate. It functions in the pathway amino-acid biosynthesis; L-serine biosynthesis; L-serine from 3-phospho-D-glycerate: step 3/3. Its function is as follows. Catalyzes the dephosphorylation of phosphoserine (P-Ser) in vitro. Also catalyzes the dephosphorylation of phosphothreonine (P-Thr) in vitro. This is Phosphoserine phosphatase from Streptomyces coelicolor (strain ATCC BAA-471 / A3(2) / M145).